The chain runs to 355 residues: UDP-N-acetylglucosamine--N-acetylmuramyl-(pentapeptide) pyrophosphoryl-undecaprenol N-acetylglucosamine transferase (355 aa).

Residues 15 to 17 (TGG), Asn127, Arg163, Ser191, Ile244, 263 to 268 (ALTVSE), and Gln288 contribute to the UDP-N-acetyl-alpha-D-glucosamine site.

It belongs to the glycosyltransferase 28 family. MurG subfamily.

The protein localises to the cell inner membrane. The catalysed reaction is di-trans,octa-cis-undecaprenyl diphospho-N-acetyl-alpha-D-muramoyl-L-alanyl-D-glutamyl-meso-2,6-diaminopimeloyl-D-alanyl-D-alanine + UDP-N-acetyl-alpha-D-glucosamine = di-trans,octa-cis-undecaprenyl diphospho-[N-acetyl-alpha-D-glucosaminyl-(1-&gt;4)]-N-acetyl-alpha-D-muramoyl-L-alanyl-D-glutamyl-meso-2,6-diaminopimeloyl-D-alanyl-D-alanine + UDP + H(+). Its pathway is cell wall biogenesis; peptidoglycan biosynthesis. Cell wall formation. Catalyzes the transfer of a GlcNAc subunit on undecaprenyl-pyrophosphoryl-MurNAc-pentapeptide (lipid intermediate I) to form undecaprenyl-pyrophosphoryl-MurNAc-(pentapeptide)GlcNAc (lipid intermediate II). This Escherichia coli (strain K12 / MC4100 / BW2952) protein is UDP-N-acetylglucosamine--N-acetylmuramyl-(pentapeptide) pyrophosphoryl-undecaprenol N-acetylglucosamine transferase.